The following is a 901-amino-acid chain: Protein translocase subunit SecA 1 (901 aa).

ATP is bound by residues glutamine 89, 107–111, and aspartate 502; that span reads GEGKT. The tract at residues 856–875 is disordered; that stretch reads AEAKASGDARPGFVEDDPST. Cysteine 885, cysteine 887, cysteine 896, and histidine 897 together coordinate Zn(2+).

This sequence belongs to the SecA family. Monomer and homodimer. Part of the essential Sec protein translocation apparatus which comprises SecA, SecYEG and auxiliary proteins SecDF-YajC and YidC. Requires Zn(2+) as cofactor.

It is found in the cell inner membrane. The protein localises to the cytoplasm. The enzyme catalyses ATP + H2O + cellular proteinSide 1 = ADP + phosphate + cellular proteinSide 2.. Functionally, part of the Sec protein translocase complex. Interacts with the SecYEG preprotein conducting channel. Has a central role in coupling the hydrolysis of ATP to the transfer of proteins into and across the cell membrane, serving both as a receptor for the preprotein-SecB complex and as an ATP-driven molecular motor driving the stepwise translocation of polypeptide chains across the membrane. The polypeptide is Protein translocase subunit SecA 1 (Ruegeria pomeroyi (strain ATCC 700808 / DSM 15171 / DSS-3) (Silicibacter pomeroyi)).